We begin with the raw amino-acid sequence, 725 residues long: Another transcription unit protein (725 aa).

The segment covering 1 to 10 (MGSQNSDDDS) has biased composition (acidic residues). Disordered regions lie at residues 1–379 (MGSQ…PETR), 566–603 (RQAM…EGSD), and 617–725 (YKKG…SDND). A compositionally biased stretch (low complexity) spans 11 to 70 (GSSGSSRSGSRSVTPQGGSAPGSQRSRRSGSGSDRSRSGSRSSRSRSGSGSPRSARSGSA). Residues 82–101 (RSKRSRSAHSRRSGSARSRK) are compositionally biased toward basic residues. Positions 104–116 (TPESPQSHRSGSL) are enriched in polar residues. The segment covering 117 to 140 (QSRKSGSPQSRRSGSPQSRKSGST) has biased composition (low complexity). The segment covering 141–160 (HSRRSGSAHSRRSGSARSRK) has biased composition (basic residues). Phosphoserine occurs at positions 175, 186, 188, and 190. Positions 206 to 223 (SRSRSRSRSGSRTSRSRS) are enriched in basic residues. Residues 224-242 (KTGTPSPNRSRSGSASGSG) show a composition bias toward low complexity. A phosphoserine mark is found at Ser265, Ser267, and Ser269. Thr286 carries the phosphothreonine modification. 3 positions are modified to phosphoserine: Ser288, Ser290, and Ser312. The span at 306–318 (GDADDISDDEDEA) shows a compositional bias: acidic residues. The span at 325 to 353 (SPVRSKSRSQSKSHSHSRSMSHSRSRSRS) shows a compositional bias: basic residues. The segment covering 354–369 (RSRDKVESQVESAPKE) has biased composition (basic and acidic residues). Ser355 carries the post-translational modification Phosphoserine. The segment covering 571-582 (NQHKSLPKKKKP) has biased composition (basic residues). A Phosphothreonine modification is found at Thr593. Ser595, Ser602, and Ser631 each carry phosphoserine. Thr632 carries the phosphothreonine modification. Phosphoserine occurs at positions 635, 636, and 642. Positions 644–665 (FEARRSKKVDKAKASKALRDSD) are enriched in basic and acidic residues. Residues 710-725 (SGSGSGSGSGSGSDND) show a composition bias toward gly residues.

In Drosophila melanogaster (Fruit fly), this protein is Another transcription unit protein (Atu).